Reading from the N-terminus, the 362-residue chain is Chorismate synthase (362 aa).

NADP(+) is bound at residue R47. FMN contacts are provided by residues 124–126 (RSS), G286, 301–305 (KPTAT), and R327.

The protein belongs to the chorismate synthase family. Homotetramer. It depends on FMNH2 as a cofactor.

It carries out the reaction 5-O-(1-carboxyvinyl)-3-phosphoshikimate = chorismate + phosphate. It participates in metabolic intermediate biosynthesis; chorismate biosynthesis; chorismate from D-erythrose 4-phosphate and phosphoenolpyruvate: step 7/7. In terms of biological role, catalyzes the anti-1,4-elimination of the C-3 phosphate and the C-6 proR hydrogen from 5-enolpyruvylshikimate-3-phosphate (EPSP) to yield chorismate, which is the branch point compound that serves as the starting substrate for the three terminal pathways of aromatic amino acid biosynthesis. This reaction introduces a second double bond into the aromatic ring system. The protein is Chorismate synthase of Synechococcus sp. (strain ATCC 27144 / PCC 6301 / SAUG 1402/1) (Anacystis nidulans).